A 375-amino-acid chain; its full sequence is Succinyl-diaminopimelate desuccinylase (375 aa).

Zn(2+) is bound at residue histidine 66. Aspartate 68 is a catalytic residue. Aspartate 99 provides a ligand contact to Zn(2+). The active-site Proton acceptor is glutamate 133. 3 residues coordinate Zn(2+): glutamate 134, glutamate 162, and histidine 348.

This sequence belongs to the peptidase M20A family. DapE subfamily. In terms of assembly, homodimer. Requires Zn(2+) as cofactor. Co(2+) is required as a cofactor.

The enzyme catalyses N-succinyl-(2S,6S)-2,6-diaminopimelate + H2O = (2S,6S)-2,6-diaminopimelate + succinate. It participates in amino-acid biosynthesis; L-lysine biosynthesis via DAP pathway; LL-2,6-diaminopimelate from (S)-tetrahydrodipicolinate (succinylase route): step 3/3. Its function is as follows. Catalyzes the hydrolysis of N-succinyl-L,L-diaminopimelic acid (SDAP), forming succinate and LL-2,6-diaminopimelate (DAP), an intermediate involved in the bacterial biosynthesis of lysine and meso-diaminopimelic acid, an essential component of bacterial cell walls. This chain is Succinyl-diaminopimelate desuccinylase, found in Klebsiella pneumoniae subsp. pneumoniae (strain ATCC 700721 / MGH 78578).